Consider the following 860-residue polypeptide: Leucine--tRNA ligase (860 aa).

The 'HIGH' region motif lies at 42-52; sequence PYPSGRLHMGH. The 'KMSKS' region motif lies at 619-623; that stretch reads KMSKS. An ATP-binding site is contributed by lysine 622.

Belongs to the class-I aminoacyl-tRNA synthetase family.

The protein resides in the cytoplasm. It carries out the reaction tRNA(Leu) + L-leucine + ATP = L-leucyl-tRNA(Leu) + AMP + diphosphate. This Escherichia coli (strain K12 / MC4100 / BW2952) protein is Leucine--tRNA ligase.